The following is a 436-amino-acid chain: Enolase (436 aa).

Gln167 contributes to the (2R)-2-phosphoglycerate binding site. Catalysis depends on Glu209, which acts as the Proton donor. Residues Asp246, Glu291, and Asp318 each contribute to the Mg(2+) site. Residues Lys343, Arg372, Ser373, and Lys394 each contribute to the (2R)-2-phosphoglycerate site. Lys343 serves as the catalytic Proton acceptor.

It belongs to the enolase family. As to quaternary structure, component of the RNA degradosome, a multiprotein complex involved in RNA processing and mRNA degradation. The cofactor is Mg(2+).

It is found in the cytoplasm. Its subcellular location is the secreted. It localises to the cell surface. It catalyses the reaction (2R)-2-phosphoglycerate = phosphoenolpyruvate + H2O. Its pathway is carbohydrate degradation; glycolysis; pyruvate from D-glyceraldehyde 3-phosphate: step 4/5. In terms of biological role, catalyzes the reversible conversion of 2-phosphoglycerate (2-PG) into phosphoenolpyruvate (PEP). It is essential for the degradation of carbohydrates via glycolysis. The polypeptide is Enolase (Haemophilus influenzae (strain 86-028NP)).